The sequence spans 319 residues: NADH-quinone oxidoreductase subunit H 1 (319 aa).

Transmembrane regions (helical) follow at residues 1-21 (MIGL…LLVV), 74-94 (FAYI…FGVI), 107-127 (VGVL…VLGA), 147-167 (LAYE…AGSL), 179-199 (VWFV…GVAA), 238-258 (VLLV…GPWL), 262-282 (IWFG…RATL), and 293-313 (FAWK…GIVV).

Belongs to the complex I subunit 1 family. NDH-1 is composed of 14 different subunits. Subunits NuoA, H, J, K, L, M, N constitute the membrane sector of the complex.

Its subcellular location is the cell inner membrane. The enzyme catalyses a quinone + NADH + 5 H(+)(in) = a quinol + NAD(+) + 4 H(+)(out). Its function is as follows. NDH-1 shuttles electrons from NADH, via FMN and iron-sulfur (Fe-S) centers, to quinones in the respiratory chain. The immediate electron acceptor for the enzyme in this species is believed to be ubiquinone. Couples the redox reaction to proton translocation (for every two electrons transferred, four hydrogen ions are translocated across the cytoplasmic membrane), and thus conserves the redox energy in a proton gradient. This subunit may bind ubiquinone. This is NADH-quinone oxidoreductase subunit H 1 from Rhodopseudomonas palustris (strain BisB5).